Consider the following 409-residue polypeptide: Sharpin (409 aa).

The interval 1–178 is self-association; sequence MAPPAGGTAA…EKEELAGRLT (178 aa). The interval 121–164 is disordered; it reads EGQNGSDSLPPALGPETRPVSPPSPLEVPTPKAPKPKVDLPWSP. The segment covering 140-153 has biased composition (pro residues); the sequence is VSPPSPLEVPTPKA. A Phosphoserine modification is found at serine 163. Residues 173 to 300 form an interaction with SHANK1 region; it reads LAGRLTRAVE…LLSAPREAPG (128 aa). The Ubiquitin-like domain occupies 217–280; sequence IRLQVTVEDA…PEHSLAFYGV (64 aa). Phosphoserine is present on serine 302. The tract at residues 315–337 is disordered; the sequence is RLFPQSLGLPPTPQPTSSSLPSP. Over residues 318-336 the composition is skewed to low complexity; the sequence is PQSLGLPPTPQPTSSSLPS. Residues 338–367 form a RanBP2-type zinc finger; the sequence is LQPGWPCPSCTFINAPSRPGCEMCSTQRPC. The disordered stretch occupies residues 384–409; it reads TRREDGPSLPGPRSLDPLLNLSGNLC.

In terms of assembly, monomer and homodimer. Component of the LUBAC complex (linear ubiquitin chain assembly complex) which consists of SHARPIN, RBCK1 and RNF31. LUBAC has a MW of approximately 600 kDa suggesting a heteromultimeric assembly of its subunits. Associates with the TNF-R1 signaling complex (TNF-RSC) in a stimulation-dependent manner. Interacts with EYA1, EYA2, SHANK1 and SHANK3 (via ANK repeats).

It is found in the cytoplasm. The protein resides in the cytosol. Its subcellular location is the synapse. It functions in the pathway protein modification; protein ubiquitination. Its function is as follows. Component of the LUBAC complex which conjugates linear polyubiquitin chains in a head-to-tail manner to substrates and plays a key role in NF-kappa-B activation and regulation of inflammation. LUBAC conjugates linear polyubiquitin to IKBKG and RIPK1 and is involved in activation of the canonical NF-kappa-B and the JNK signaling pathways. Linear ubiquitination mediated by the LUBAC complex interferes with TNF-induced cell death and thereby prevents inflammation. LUBAC is recruited to the TNF-R1 signaling complex (TNF-RSC) following polyubiquitination of TNF-RSC components by BIRC2 and/or BIRC3 and to conjugate linear polyubiquitin to IKBKG and possibly other components contributing to the stability of the complex. The LUBAC complex is also involved in innate immunity by conjugating linear polyubiquitin chains at the surface of bacteria invading the cytosol to form the ubiquitin coat surrounding bacteria. LUBAC is not able to initiate formation of the bacterial ubiquitin coat, and can only promote formation of linear polyubiquitins on pre-existing ubiquitin. The bacterial ubiquitin coat acts as an 'eat-me' signal for xenophagy and promotes NF-kappa-B activation. Together with OTULIN, the LUBAC complex regulates the canonical Wnt signaling during angiogenesis. This Bos taurus (Bovine) protein is Sharpin (SHARPIN).